A 138-amino-acid chain; its full sequence is Thyrotropin subunit beta (138 aa).

The signal sequence occupies residues 1–20 (MSAAVLLSVLFALACGQAAS). 6 cysteine pairs are disulfide-bonded: cysteine 22–cysteine 72, cysteine 36–cysteine 87, cysteine 39–cysteine 125, cysteine 47–cysteine 103, cysteine 51–cysteine 105, and cysteine 108–cysteine 115. Asparagine 43 carries an N-linked (GlcNAc...) asparagine glycan. Residues 133-138 (LGGFSV) constitute a propeptide that is removed on maturation.

The protein belongs to the glycoprotein hormones subunit beta family. As to quaternary structure, heterodimer of a common alpha chain and a unique beta chain which confers biological specificity to thyrotropin, lutropin, follitropin and gonadotropin.

The protein localises to the secreted. Its function is as follows. Indispensable for the control of thyroid structure and metabolism. The sequence is that of Thyrotropin subunit beta (Tshb) from Mus musculus (Mouse).